The sequence spans 149 residues: D-aminoacyl-tRNA deacylase (149 aa).

The Gly-cisPro motif, important for rejection of L-amino acids motif lies at 137–138 (GP).

Belongs to the DTD family. As to quaternary structure, homodimer.

It localises to the cytoplasm. It catalyses the reaction glycyl-tRNA(Ala) + H2O = tRNA(Ala) + glycine + H(+). The enzyme catalyses a D-aminoacyl-tRNA + H2O = a tRNA + a D-alpha-amino acid + H(+). Its function is as follows. An aminoacyl-tRNA editing enzyme that deacylates mischarged D-aminoacyl-tRNAs. Also deacylates mischarged glycyl-tRNA(Ala), protecting cells against glycine mischarging by AlaRS. Acts via tRNA-based rather than protein-based catalysis; rejects L-amino acids rather than detecting D-amino acids in the active site. By recycling D-aminoacyl-tRNA to D-amino acids and free tRNA molecules, this enzyme counteracts the toxicity associated with the formation of D-aminoacyl-tRNA entities in vivo and helps enforce protein L-homochirality. This chain is D-aminoacyl-tRNA deacylase, found in Fervidobacterium nodosum (strain ATCC 35602 / DSM 5306 / Rt17-B1).